The following is a 1109-amino-acid chain: ABC transporter G family member 28 (1109 aa).

2 helical membrane-spanning segments follow: residues 5 to 25 (NSYF…LILQ) and 291 to 311 (NITA…IILY). Residues 325–411 (QAKSREKAVQ…DTKKGKKKEK (87 aa)) are disordered. Residues 339-357 (SQSREKWKSAKDIAKKHAT) are compositionally biased toward basic and acidic residues. The region spanning 499–741 (VAFKDLSITL…FSSLGIVVPE (243 aa)) is the ABC transporter domain. 533–540 (GPSGAGKT) is an ATP binding site. Positions 859 to 1056 (QQYRYFLGRL…ALEAFVVSNA (198 aa)) constitute an ABC transmembrane type-2 domain. 6 helical membrane passes run 879-899 (LAVD…LAKV), 904-924 (FGAM…KITA), 954-974 (TVDH…FYFF), 986-1006 (VVLI…AILF), 1008-1028 (PGPA…IATS), and 1084-1104 (CLVF…FCMV).

It belongs to the ABC transporter superfamily. ABCG family. Eye pigment precursor importer (TC 3.A.1.204) subfamily.

The protein localises to the membrane. The polypeptide is ABC transporter G family member 28 (ABCG28) (Arabidopsis thaliana (Mouse-ear cress)).